The following is an 882-amino-acid chain: Cutinase transcription factor 1 beta (882 aa).

Positions 1–20 (MNAETPEGSAAPPSPASTSA) are enriched in low complexity. The tract at residues 1 to 49 (MNAETPEGSAAPPSPASTSAKTVTDKTNKKRASPSGDSEQPTKVTKRRA) is disordered. The zn(2)-C6 fungal-type DNA-binding region spans 53 to 81 (CVSCRARKVRCDVVEGAPCGNCRWDNVEC). The segment at 117-148 (NPMGMSTADLRRPSSGSAISTSSIDGPSSFLS) is disordered. The span at 130–139 (SSGSAISTSS) shows a compositional bias: low complexity.

The protein resides in the nucleus. This is Cutinase transcription factor 1 beta (CTF1-BETA) from Fusarium vanettenii (Neocosmospora pisi).